The chain runs to 123 residues: Small ribosomal subunit protein uS12 (123 aa).

A 3-methylthioaspartic acid modification is found at D89.

It belongs to the universal ribosomal protein uS12 family. Part of the 30S ribosomal subunit. Contacts proteins S8 and S17. May interact with IF1 in the 30S initiation complex.

Functionally, with S4 and S5 plays an important role in translational accuracy. Interacts with and stabilizes bases of the 16S rRNA that are involved in tRNA selection in the A site and with the mRNA backbone. Located at the interface of the 30S and 50S subunits, it traverses the body of the 30S subunit contacting proteins on the other side and probably holding the rRNA structure together. The combined cluster of proteins S8, S12 and S17 appears to hold together the shoulder and platform of the 30S subunit. This is Small ribosomal subunit protein uS12 from Syntrophus aciditrophicus (strain SB).